The chain runs to 164 residues: Putative histone H2B type 2-D (164 aa).

Low complexity predominate over residues 1 to 12 (MPEPAKFAPAPK). The interval 1–33 (MPEPAKFAPAPKKGSKKAVTKAQKKDGKKRKRS) is disordered. An N-acetylproline modification is found at proline 2. Lysine 6 carries the post-translational modification N6-(2-hydroxyisobutyryl)lysine; alternate. 2 positions are modified to N6-(beta-hydroxybutyryl)lysine; alternate: lysine 6 and lysine 12. Residues lysine 6, lysine 12, and lysine 13 each carry the N6-acetyllysine; alternate modification. Lysine 6 bears the N6-butyryllysine; alternate mark. An N6-crotonyllysine; alternate mark is found at lysine 6, lysine 12, and lysine 13. An N6-lactoyllysine; alternate mark is found at lysine 6 and lysine 12. Residue lysine 6 forms a Glycyl lysine isopeptide (Lys-Gly) (interchain with G-Cter in SUMO2); alternate linkage. An N6-(2-hydroxyisobutyryl)lysine; alternate modification is found at lysine 13. Serine 15 is modified (phosphoserine; by STK4/MST1). Lysine 16, lysine 17, lysine 21, and lysine 24 each carry N6-acetyllysine; alternate. 4 positions are modified to N6-crotonyllysine; alternate: lysine 16, lysine 17, lysine 21, and lysine 24. 4 positions are modified to N6-lactoyllysine; alternate: lysine 16, lysine 17, lysine 21, and lysine 24. 2 positions are modified to N6-(beta-hydroxybutyryl)lysine; alternate: lysine 17 and lysine 21. An N6-glutaryllysine; alternate modification is found at lysine 17. 2 positions are modified to N6-(2-hydroxyisobutyryl)lysine; alternate: lysine 21 and lysine 24. Position 21 is an N6-butyryllysine; alternate (lysine 21). Lysine 21 participates in a covalent cross-link: Glycyl lysine isopeptide (Lys-Gly) (interchain with G-Cter in SUMO2); alternate. Residue lysine 25 is modified to N6-(2-hydroxyisobutyryl)lysine. Residue lysine 35 is modified to N6-(2-hydroxyisobutyryl)lysine; alternate. Lysine 35 carries the N6-(beta-hydroxybutyryl)lysine; alternate modification. Residue lysine 35 is modified to N6-crotonyllysine; alternate. The residue at position 35 (lysine 35) is an N6-glutaryllysine; alternate. At lysine 35 the chain carries N6-succinyllysine; alternate. Lysine 35 is covalently cross-linked (Glycyl lysine isopeptide (Lys-Gly) (interchain with G-Cter in ubiquitin); alternate). Serine 37 bears the Phosphoserine; by AMPK mark. N6-(2-hydroxyisobutyryl)lysine; alternate is present on residues lysine 44, lysine 47, and lysine 58. Position 44 is an N6-lactoyllysine; alternate (lysine 44). An N6-glutaryllysine; alternate mark is found at lysine 44 and lysine 47. Lysine 47 carries the post-translational modification N6-methyllysine; alternate. The residue at position 58 (lysine 58) is an N6,N6-dimethyllysine; alternate. Arginine 80 is modified (dimethylated arginine). Lysine 86 bears the N6-(2-hydroxyisobutyryl)lysine; alternate mark. Lysine 86 bears the N6-(beta-hydroxybutyryl)lysine; alternate mark. The residue at position 86 (lysine 86) is an N6-acetyllysine; alternate. Lysine 86 bears the N6-lactoyllysine; alternate mark. Lysine 86 is subject to N6,N6,N6-trimethyllysine; alternate. Residues arginine 87 and arginine 93 each carry the omega-N-methylarginine modification. The tract at residues 111–140 (PCPRAPRRSPSTPAPSESLPGPGARSLPPS) is disordered.

It belongs to the histone H2B family. The nucleosome is a histone octamer containing two molecules each of H2A, H2B, H3 and H4 assembled in one H3-H4 heterotetramer and two H2A-H2B heterodimers. The octamer wraps approximately 147 bp of DNA. Phosphorylation at Ser-37 (H2BS36ph) by AMPK in response to stress promotes transcription. Phosphorylated on Ser-15 (H2BS14ph) by STK4/MST1 during apoptosis; which facilitates apoptotic chromatin condensation. Also phosphorylated on Ser-15 in response to DNA double strand breaks (DSBs), and in correlation with somatic hypermutation and immunoglobulin class-switch recombination. Post-translationally, crotonylation (Kcr) is specifically present in male germ cells and marks testis-specific genes in post-meiotic cells, including X-linked genes that escape sex chromosome inactivation in haploid cells. Crotonylation marks active promoters and enhancers and confers resistance to transcriptional repressors. It is also associated with post-meiotically activated genes on autosomes. In terms of processing, lactylated in macrophages by EP300/P300 by using lactoyl-CoA directly derived from endogenous or exogenous lactate, leading to stimulates gene transcription.

It localises to the nucleus. The protein resides in the chromosome. Its function is as follows. Core component of nucleosome. Nucleosomes wrap and compact DNA into chromatin, limiting DNA accessibility to the cellular machineries which require DNA as a template. Histones thereby play a central role in transcription regulation, DNA repair, DNA replication and chromosomal stability. DNA accessibility is regulated via a complex set of post-translational modifications of histones, also called histone code, and nucleosome remodeling. The polypeptide is Putative histone H2B type 2-D (Homo sapiens (Human)).